A 149-amino-acid polypeptide reads, in one-letter code: Transcriptional regulator MraZ (149 aa).

SpoVT-AbrB domains are found at residues 7–54 and 83–126; these read KYIN…GIAH and AVQL…QPQN.

It belongs to the MraZ family. In terms of assembly, forms oligomers.

The protein localises to the cytoplasm. Its subcellular location is the nucleoid. This Rickettsia typhi (strain ATCC VR-144 / Wilmington) protein is Transcriptional regulator MraZ.